The chain runs to 139 residues: Probable DNA-binding protein (139 aa).

Positions 97 to 139 (DEPSREASPDLGAAGAELEDESAQAGAVQGPETLRSQVLRART) are disordered.

The protein is Probable DNA-binding protein of Homo sapiens (Human).